The primary structure comprises 142 residues: Peptide methionine sulfoxide reductase MsrB (142 aa).

Residues 10-132 form the MsrB domain; that stretch reads EEEWKKVLTP…NSVSLNFKTE (123 aa). The Zn(2+) site is built by cysteine 49, cysteine 52, cysteine 98, and cysteine 101. The active-site Nucleophile is cysteine 121.

This sequence belongs to the MsrB Met sulfoxide reductase family. Requires Zn(2+) as cofactor.

It catalyses the reaction L-methionyl-[protein] + [thioredoxin]-disulfide + H2O = L-methionyl-(R)-S-oxide-[protein] + [thioredoxin]-dithiol. The protein is Peptide methionine sulfoxide reductase MsrB of Methanosarcina barkeri (strain Fusaro / DSM 804).